The following is a 500-amino-acid chain: MNYFPWLTIIIVLPIFAGFLILFLPHRGNKVIRWYTLCICIIELLLTTYAFGYHFQLDDPLIQLAEDYKWIDFLDFSWRLGIDGISIGPILLTGFITTLATLAARPVTRESRVFHFLMLAMYSGQIGPFSSQNLLLFFIMWELELIPVYLLLSMWGGKKRLYSATKFILYTAGSSAFLLVGILGICLSASNEPTLNFETSANQSYPVALEMLFYIGFFIAFAVKSPIIPLHTWLPDTHGEAHYSTCMLLAGILLKMGAYGLVRINMELLPHAHSIFSPWLMIVGTIQIIYAASTSPGQRNLKKRIAYSSVSHMGFIIIGLGSINDTGLNGAILQIISHGFIGAALFFLAGTSYDRIRLVYLDEMGGMAITIPKIFTTFSILSMASLALPGMSGFVAELILFFGILTSQKYLLMTKILITFVMAIGMILTPIYSLSMLRQMFYGYKLFTATNSYFVDSGPREFFVSISILLPVIAIGIYPDFVFSLSVDKVEALLSNYFYP.

Helical transmembrane passes span 4-24, 37-57, 84-104, 111-129, 134-154, 167-187, 208-228, 242-262, 272-292, 305-325, 330-350, 386-406, 416-436, and 462-482; these read FPWLTIIIVLPIFAGFLILFL, LCICIIELLLTTYAFGYHFQL, GISIGPILLTGFITTLATLAA, SRVFHFLMLAMYSGQIGPF, LLLFFIMWELELIPVYLLLSM, FILYTAGSSAFLLVGILGICL, ALEMLFYIGFFIAFAVKSPII, HYSTCMLLAGILLKMGAYGLV, AHSIFSPWLMIVGTIQIIYAA, IAYSSVSHMGFIIIGLGSIND, GAILQIISHGFIGAALFFLAG, LALPGMSGFVAELILFFGILT, ILITFVMAIGMILTPIYSLSM, and FFVSISILLPVIAIGIYPDFV.

Belongs to the complex I subunit 4 family.

It localises to the plastid. It is found in the chloroplast thylakoid membrane. It catalyses the reaction a plastoquinone + NADH + (n+1) H(+)(in) = a plastoquinol + NAD(+) + n H(+)(out). The catalysed reaction is a plastoquinone + NADPH + (n+1) H(+)(in) = a plastoquinol + NADP(+) + n H(+)(out). The polypeptide is NAD(P)H-quinone oxidoreductase chain 4, chloroplastic (Morus indica (Mulberry)).